A 115-amino-acid polypeptide reads, in one-letter code: Large ribosomal subunit protein bL20 (115 aa).

Belongs to the bacterial ribosomal protein bL20 family.

Its function is as follows. Binds directly to 23S ribosomal RNA and is necessary for the in vitro assembly process of the 50S ribosomal subunit. It is not involved in the protein synthesizing functions of that subunit. The chain is Large ribosomal subunit protein bL20 from Chlorobium luteolum (strain DSM 273 / BCRC 81028 / 2530) (Pelodictyon luteolum).